The sequence spans 216 residues: Protein-L-isoaspartate O-methyltransferase (216 aa).

S62 is an active-site residue.

This sequence belongs to the methyltransferase superfamily. L-isoaspartyl/D-aspartyl protein methyltransferase family.

The protein localises to the cytoplasm. The enzyme catalyses [protein]-L-isoaspartate + S-adenosyl-L-methionine = [protein]-L-isoaspartate alpha-methyl ester + S-adenosyl-L-homocysteine. Functionally, catalyzes the methyl esterification of L-isoaspartyl residues in peptides and proteins that result from spontaneous decomposition of normal L-aspartyl and L-asparaginyl residues. It plays a role in the repair and/or degradation of damaged proteins. In Methanospirillum hungatei JF-1 (strain ATCC 27890 / DSM 864 / NBRC 100397 / JF-1), this protein is Protein-L-isoaspartate O-methyltransferase.